We begin with the raw amino-acid sequence, 364 residues long: Nucleosome assembly protein 1;2 (364 aa).

Positions 32–86 (VESIKNTLQGLAARHTDVLESLEPKVRKRVEVLREIQSQHDDLEAKFFEERAALE) form a coiled coil. A Nuclear export signal motif is present at residues 53-68 (LEPKVRKRVEVLREIQ). Residues 227-232 (KKKPKK) carry the Nuclear localization signal motif. 2 disordered regions span residues 250 to 269 (FNFF…DEDT) and 301 to 364 (GEAA…CKQQ). 2 stretches are compositionally biased toward acidic residues: residues 259–269 (PDDDEEIDEDT) and 304–340 (AQDE…DDED). Cys-361 is modified (cysteine methyl ester). Residue Cys-361 is the site of S-farnesyl cysteine attachment. A propeptide spans 362–364 (KQQ) (removed in mature form).

This sequence belongs to the nucleosome assembly protein (NAP) family.

The protein resides in the nucleus. The protein localises to the cytoplasm. May modulate chromatin structure by regulation of nucleosome assembly/disassembly. The polypeptide is Nucleosome assembly protein 1;2 (NAP1;2) (Oryza sativa subsp. japonica (Rice)).